The primary structure comprises 2885 residues: Chromodomain-helicase-DNA-binding protein 9 (2885 aa).

The segment at 173 to 195 is disordered; the sequence is QCSSLHSQQSRSNLNPGQNSLGQ. Residue K197 forms a Glycyl lysine isopeptide (Lys-Gly) (interchain with G-Cter in SUMO2) linkage. 3 disordered regions span residues 242 to 263, 283 to 347, and 479 to 677; these read CSSHQEGNYNRPSPSMTSCSVS, SLLQ…QGNY, and CLQR…QPLQ. 2 stretches are compositionally biased toward polar residues: residues 243-263 and 283-310; these read SSHQEGNYNRPSPSMTSCSVS and SLLQSSAGLAPGHTNQALSDFAGSNSFS. Residues 323–334 show a composition bias toward low complexity; that stretch reads LLNPTPSLNSNN. Composition is skewed to polar residues over residues 335 to 347 and 483 to 505; these read FQILHSSHPQGNY and QPPSSKKSDGSGTYTKLQNTQVR. At K498 the chain carries N6-acetyllysine. Basic and acidic residues-rich tracts occupy residues 507-526 and 534-544; these read MSEKKPRKRVESESKQEKAN and ARAKERGERNI. At S549 the chain carries Phosphoserine. The segment covering 572–592 has biased composition (basic and acidic residues); the sequence is KPKDRDNKKPKTYSKLKEKTK. K595 is covalently cross-linked (Glycyl lysine isopeptide (Lys-Gly) (interchain with G-Cter in SUMO2)). Position 610 is a phosphoserine (S610). Residues 617 to 630 show a composition bias toward basic and acidic residues; it reads AEQRSQHTFKEQHS. Residues 631–643 are compositionally biased toward basic residues; the sequence is QKRRSNRQIKRKK. The segment covering 644-659 has biased composition (basic and acidic residues); sequence YAEDAEGKQSEEEVKG. Chromo domains follow at residues 689-760 and 772-838; these read AIVD…HFLA and VEVD…HLDR. The LXXLL motif 1 signature appears at 867-871; sequence LNWLL. Residues 871-1045 enclose the Helicase ATP-binding domain; it reads LFNWYNRRNC…FSLLHFLEPL (175 aa). 884 to 891 is a binding site for ATP; that stretch reads DEMGLGKT. The short motif at 996–999 is the DEAH box element; it reads DEAH. Residues 1035–1039 carry the LXXLL motif 2 motif; that stretch reads LFSLL. In terms of domain architecture, Helicase C-terminal spans 1185–1336; the sequence is LIDKLLPKMK…KAVLQSMSGR (152 aa). Residues 1460–1484 are disordered; sequence KDELAELSEAESEGEEKPKLRRPCD. Residues 1464–1473 show a composition bias toward acidic residues; it reads AELSEAESEG. Residues S1467 and S1471 each carry the phosphoserine modification. Over residues 1474–1484 the composition is skewed to basic and acidic residues; sequence EEKPKLRRPCD. Residues K1587, K1737, and K1902 each participate in a glycyl lysine isopeptide (Lys-Gly) (interchain with G-Cter in SUMO2) cross-link. S2025 carries the post-translational modification Phosphoserine. Positions 2030-2034 match the LXXLL motif 3 motif; it reads LPRLL. K2037 participates in a covalent cross-link: Glycyl lysine isopeptide (Lys-Gly) (interchain with G-Cter in SUMO2). A disordered region spans residues 2046-2238; the sequence is VKSESLTEEP…TQDSFQANNG (193 aa). Phosphoserine is present on residues S2057 and S2058. K2073 participates in a covalent cross-link: Glycyl lysine isopeptide (Lys-Gly) (interchain with G-Cter in SUMO2). Residues S2074 and S2078 each carry the phosphoserine modification. Polar residues predominate over residues 2083-2092; that stretch reads VLSQATGDQK. Positions 2093 to 2103 are enriched in basic and acidic residues; that stretch reads SGGKSETDRRM. A compositionally biased stretch (low complexity) spans 2127 to 2193; the sequence is SQSSSDSDSD…SSSSSSSSSS (67 aa). Residues 2201–2215 show a composition bias toward basic and acidic residues; sequence DVQKREGTPHRKAYD. The segment covering 2220 to 2238 has biased composition (polar residues); that stretch reads ASLSTTQDETQDSFQANNG. A binds A/T-rich DNA region spans residues 2331–2471; it reads QMSKVKKHVR…LSYPQPQRIP (141 aa). Residues K2349, K2355, and K2360 each participate in a glycyl lysine isopeptide (Lys-Gly) (interchain with G-Cter in SUMO2) cross-link. The a.T hook-like stretch occupies residues 2428–2435; the sequence is KKRRGRRR. Residues 2473–2494 form a disordered region; sequence TESPVPVINLKDGTRLAGDDAP. A compositionally biased stretch (basic and acidic residues) spans 2484-2494; it reads DGTRLAGDDAP. Positions 2710–2714 match the LXXLL motif 4 motif; sequence LPNLL. Residues 2724-2770 are disordered; sequence AESGAEEKRGNDSKELEGKKERTESQSPENGGERCVPGSPSTSSTAA. Basic and acidic residues predominate over residues 2728–2747; it reads AEEKRGNDSKELEGKKERTE. The LXXLL motif 5 motif lies at 2782-2786; sequence LNPLL. The segment covering 2818–2847 has biased composition (basic and acidic residues); the sequence is KNKSDDLDSSKSVEIKEENSRVRDQEEKGG. The tract at residues 2818-2885 is disordered; that stretch reads KNKSDDLDSS…SEDSDSSNED (68 aa). K2833 participates in a covalent cross-link: Glycyl lysine isopeptide (Lys-Gly) (interchain with G-Cter in SUMO2). Over residues 2864 to 2876 the composition is skewed to low complexity; the sequence is RASSGSDSSSSSS.

The protein belongs to the SNF2/RAD54 helicase family. In terms of assembly, interacts with PPARA. Probably interacts with ESR1 and NR1I3. Phosphorylated on serine and tyrosine residues. In terms of tissue distribution, expressed in osteoprogenitor cells during development and in mature bone (at protein level).

The protein resides in the cytoplasm. It is found in the nucleus. The enzyme catalyses ATP + H2O = ADP + phosphate + H(+). In terms of biological role, probable ATP-dependent chromatin-remodeling factor. Acts as a transcriptional coactivator for PPARA and possibly other nuclear receptors. Has DNA-dependent ATPase activity and binds to A/T-rich DNA. Associates with A/T-rich regulatory regions in promoters of genes that participate in the differentiation of progenitors during osteogenesis. The polypeptide is Chromodomain-helicase-DNA-binding protein 9 (Chd9) (Mus musculus (Mouse)).